Reading from the N-terminus, the 698-residue chain is UvrABC system protein B (698 aa).

In terms of domain architecture, Helicase ATP-binding spans 28–414 (RRILAGERDV…SGGEFVEQVI (387 aa)). 41–48 (GATGTGKS) serves as a coordination point for ATP. The Beta-hairpin signature appears at 94–117 (YYDYYQPEAYIAQTDTYIEKDSSI). The Helicase C-terminal domain occupies 432–598 (QIDDLIGEIR…PLRKKIADIL (167 aa)). Residues 609 to 629 (DTVQVGGSGRNVSRGRRAQSE) are disordered. The UVR domain occupies 653 to 688 (ADLIKDLTAQMMAAASDLQFELAARFRDEIADLKKE).

The protein belongs to the UvrB family. As to quaternary structure, forms a heterotetramer with UvrA during the search for lesions. Interacts with UvrC in an incision complex.

The protein resides in the cytoplasm. Its function is as follows. The UvrABC repair system catalyzes the recognition and processing of DNA lesions. A damage recognition complex composed of 2 UvrA and 2 UvrB subunits scans DNA for abnormalities. Upon binding of the UvrA(2)B(2) complex to a putative damaged site, the DNA wraps around one UvrB monomer. DNA wrap is dependent on ATP binding by UvrB and probably causes local melting of the DNA helix, facilitating insertion of UvrB beta-hairpin between the DNA strands. Then UvrB probes one DNA strand for the presence of a lesion. If a lesion is found the UvrA subunits dissociate and the UvrB-DNA preincision complex is formed. This complex is subsequently bound by UvrC and the second UvrB is released. If no lesion is found, the DNA wraps around the other UvrB subunit that will check the other stand for damage. This chain is UvrABC system protein B, found in Mycobacterium leprae (strain TN).